Here is a 156-residue protein sequence, read N- to C-terminus: Transcription inhibitor protein Gfh1 (156 aa).

Residues 1 to 74 (MAREVKLTKA…LEDILSRAVI (74 aa)) adopt a coiled-coil conformation. E20 and E24 together coordinate Zn(2+).

It belongs to the GreA/GreB family. In terms of assembly, interacts with RNAP.

Its function is as follows. Inhibits all catalytic activities of RNA polymerase (RNAP) by partially occluding its substrate-binding site and preventing NTP binding. In Thermus thermophilus (strain ATCC 27634 / DSM 579 / HB8), this protein is Transcription inhibitor protein Gfh1 (gfh1).